The following is a 1475-amino-acid chain: MIIEERKNHELNLESIDRDLRMENVRQSAEKLGWEHFARSVRRNLLEKRQTLDARTRLDVLGSLVFMKEHLPIDNDATIARKVQQLSEGLGEHCVFSTQNSGFSIRNPDVTIDIGVAEDQISTCKIGYFGQPLTDAPGALALMKNGEFSKLRDSITAILSSLPKEITLSEKNACKEAFRALDQLLIRDAADSSFTAINTGKYGFYAPRNELRSGRIYYVAEPVLIRLAEKEGKTKADASYLDLLPYIEISFFKHDKPSKLPVFTQTGEWSTFNDANVCICVRFNQGFLLSQQTIRKLSHIVPKSPLVRNYVNFYRYMTGRVGVKSNLKLLTQFPDEGDIQQQYQVDSKMLTKEDDVVAMEMYLSDFRDLSKLIETLRSEWKHASLWESILAICESSKGEQKEVNAVDMQLVLRRTEFFLQFDTDYGSMTMQIFEKSPSNYVVKTTSQITGESPSLDFDKMLTEKLNSTWSIPATLTFAITDLKCRINSVLNCVISFDSSSSSDKQHQNYWSISNNNTQLMQSAAQKSAAKCTKKKVTVLEVGPAIEPTQLVYTRENDEEFQGSLLSSFGEVDDYYVKTSTIGRTRPQPRPKREPNQLTSMDMMSAELDKSRHTMEGSMRDAQTSSFLDAARVRMKQSIGAAHAVGLASHQPPASPVAAAAAAPGGPMRHNSYPSGFEPPPSVAPYDFPADPSKKQRKQRAKKQPGEEPPAGRGKGGKKGRGAGAVGAAAAGGRKSAGGAGENPFGMDPMRPPMLQRSSSEQHNPNPHQMSQYQMQQYQQNQQFRMHQMQQQQQQQFQMQSPKNPLVPAYTDEDSDEECDPPPPPKPQVSTSSRMSSVPSHPPPPPQQLGNPMVGYPGMPLQSPNHLPLTPSPLSAPPKPFSPEQQHHFGMKMRETSYWKELERLETKPDVEKLKQQLSSSSSSSQAEASDPPSTSTEAQDPPKPSSSSAPPPPKKKLGLEAAISKIRGQQEQALQKQLQQQESVESELATPHPGSSGAPPLAPHQVNRARNLNDIFDDEADDSSPTADIKPSLQALQKPTDTSSQSTSSEPPPKKEPADEQPEREKEKLILKIPKMLKPVVDDRREDRKERDRDRDRDRDRDEDREKVRDKEDKAQREKDKKEKERERRRQRDRDRTEQKKSDREKEPSKKRKLEKKDEKEKDRREPERKKGKSDGKEYSKASTTSLIPTLSLKNFRIPKKDTVEEEKKDVKEEAPGPSSSTESKKEPPSAAPITRKESTTAPVAPAVQQQQQRKESFTALPSLPEQQQHHREPLLKKKPPLQPPPPPQMTGPPIGIYPGPPAPGNLPGSSRPSGNRKQPLPPPPPMIRGPPPDQMYRDRSGGGGGSMRGGFPPASHYHGGTSGVNKQVASYAQGLPPGMGPPVVKPHGNNYQASQWVRPPTHRDSSHSYHGMPSLGPPQLQREPPAPPPPQMIPLPKDPPVLREHPREHRAHRGGADDDGPDSPEEGTLRIDDE.

Disordered regions lie at residues 579–600 (STIG…LTSM), 645–894 (GLAS…KMRE), and 908–1475 (PDVE…IDDE). The span at 655–666 (PVAAAAAAPGGP) shows a compositional bias: low complexity. Residues 755–766 (QRSSSEQHNPNP) are compositionally biased toward polar residues. Residues 767-800 (HQMSQYQMQQYQQNQQFRMHQMQQQQQQQFQMQS) are compositionally biased toward low complexity. Positions 810–819 (TDEDSDEECD) are enriched in acidic residues. The span at 829-838 (STSSRMSSVP) shows a compositional bias: low complexity. Residues 869–880 (TPSPLSAPPKPF) are compositionally biased toward pro residues. The span at 915-929 (QQLSSSSSSSQAEAS) shows a compositional bias: low complexity. A compositionally biased stretch (pro residues) spans 941-952 (PPKPSSSSAPPP). Low complexity-rich tracts occupy residues 969–989 (QQEQ…SELA) and 1037–1049 (QKPT…STSS). Basic and acidic residues-rich tracts occupy residues 1052–1070 (PPKK…EKLI), 1080–1148 (VVDD…EKEP), and 1155–1180 (EKKD…KEYS). The stretch at 1098-1135 (DRDRDEDREKVRDKEDKAQREKDKKEKERERRRQRDRD) forms a coiled coil. Polar residues predominate over residues 1181–1193 (KASTTSLIPTLSL). Residues 1199-1215 (PKKDTVEEEKKDVKEEA) are compositionally biased toward basic and acidic residues. Residues 1242-1252 (APVAPAVQQQQ) show a composition bias toward low complexity. Residues 1281 to 1291 (PLQPPPPPQMT) show a composition bias toward pro residues. Over residues 1308 to 1317 (PGSSRPSGNR) the composition is skewed to polar residues. Composition is skewed to pro residues over residues 1320–1334 (PLPP…PPPD) and 1425–1440 (PPAP…PKDP).

This sequence belongs to the Mediator complex subunit 1 family. Component of the Mediator complex.

It localises to the nucleus. Component of the Mediator complex, a coactivator involved in the regulated transcription of nearly all RNA polymerase II-dependent genes. Mediator functions as a bridge to convey information from gene-specific regulatory proteins to the basal RNA polymerase II transcription machinery. Mediator is recruited to promoters by direct interactions with regulatory proteins and serves as a scaffold for the assembly of a functional preinitiation complex with RNA polymerase II and the general transcription factors. This is Mediator of RNA polymerase II transcription subunit 1.1 (sop-3) from Caenorhabditis elegans.